A 165-amino-acid chain; its full sequence is Putative pre-16S rRNA nuclease (165 aa).

The protein belongs to the YqgF nuclease family.

The protein resides in the cytoplasm. Functionally, could be a nuclease involved in processing of the 5'-end of pre-16S rRNA. In Beijerinckia indica subsp. indica (strain ATCC 9039 / DSM 1715 / NCIMB 8712), this protein is Putative pre-16S rRNA nuclease.